The chain runs to 1645 residues: Protein MON2 homolog (1645 aa).

It belongs to the MON2 family.

Functionally, may be required for traffic between late Golgi and early endosomes. The chain is Protein MON2 homolog from Caenorhabditis briggsae.